Reading from the N-terminus, the 610-residue chain is tRNA uridine 5-carboxymethylaminomethyl modification enzyme MnmG (610 aa).

Residue 14–19 participates in FAD binding; the sequence is GAGHAG. 274–288 contacts NAD(+); the sequence is GPRYCPSIEDKIVKF.

Belongs to the MnmG family. Homodimer. Heterotetramer of two MnmE and two MnmG subunits. FAD is required as a cofactor.

The protein resides in the cytoplasm. NAD-binding protein involved in the addition of a carboxymethylaminomethyl (cmnm) group at the wobble position (U34) of certain tRNAs, forming tRNA-cmnm(5)s(2)U34. The chain is tRNA uridine 5-carboxymethylaminomethyl modification enzyme MnmG from Chlamydia trachomatis serovar A (strain ATCC VR-571B / DSM 19440 / HAR-13).